A 322-amino-acid chain; its full sequence is Quinolinate synthase (322 aa).

Iminosuccinate-binding residues include His38 and Ser55. Cys100 contacts [4Fe-4S] cluster. Iminosuccinate-binding positions include 126-128 (YIN) and Ser143. Cys186 contacts [4Fe-4S] cluster. Residues 212-214 (HPE) and Thr229 contribute to the iminosuccinate site. Cys279 is a [4Fe-4S] cluster binding site.

The protein belongs to the quinolinate synthase family. Type 2 subfamily. [4Fe-4S] cluster serves as cofactor.

The protein resides in the cytoplasm. It catalyses the reaction iminosuccinate + dihydroxyacetone phosphate = quinolinate + phosphate + 2 H2O + H(+). Its pathway is cofactor biosynthesis; NAD(+) biosynthesis; quinolinate from iminoaspartate: step 1/1. Catalyzes the condensation of iminoaspartate with dihydroxyacetone phosphate to form quinolinate. The protein is Quinolinate synthase of Aquifex aeolicus (strain VF5).